The following is a 305-amino-acid chain: Protoheme IX farnesyltransferase (305 aa).

9 helical membrane passes run 28–48 (IIEL…QGVP), 52–72 (LVLL…ALNM), 101–121 (LAFG…TVNW), 122–142 (LSAW…TMIL), 149–169 (NIVW…SSVT), 174–194 (WAPV…YWPL), 218–238 (VVAR…LLLT), 240–260 (LGYT…FWLW), and 283–303 (LFHW…VDPF).

Belongs to the UbiA prenyltransferase family. Protoheme IX farnesyltransferase subfamily.

The protein localises to the cell membrane. The enzyme catalyses heme b + (2E,6E)-farnesyl diphosphate + H2O = Fe(II)-heme o + diphosphate. It functions in the pathway porphyrin-containing compound metabolism; heme O biosynthesis; heme O from protoheme: step 1/1. Functionally, converts heme B (protoheme IX) to heme O by substitution of the vinyl group on carbon 2 of heme B porphyrin ring with a hydroxyethyl farnesyl side group. The chain is Protoheme IX farnesyltransferase from Streptomyces avermitilis (strain ATCC 31267 / DSM 46492 / JCM 5070 / NBRC 14893 / NCIMB 12804 / NRRL 8165 / MA-4680).